The sequence spans 305 residues: Homeobox protein NANOGP8 (305 aa).

Positions 1-96 (MSVDPACPQS…KEDKVPVKKQ (96 aa)) are disordered. Positions 65 to 82 (SPDSSTSPKGKQPTSAEN) are enriched in polar residues. Residues 95 to 154 (KQKTRTVFSSTQLCVLNDRFQRQKYLSLQQMQELSNILNLSYKQVKTWFQNQRMKSKRWQ) constitute a DNA-binding region (homeobox). A run of 8 repeats spans residues 196–200 (WSNQT), 201–205 (WNNST), 206–210 (WSNQT), 216–220 (WSNHS), 221–225 (WNTQT), 226–230 (WCTQS), 231–235 (WNNQA), and 236–240 (WNSPF). Residues 196–240 (WSNQTWNNSTWSNQTQNIQSWSNHSWNTQTWCTQSWNNQAWNSPF) are 8 X repeats starting with a Trp in each unit. The tract at residues 196–240 (WSNQTWNNSTWSNQTQNIQSWSNHSWNTQTWCTQSWNNQAWNSPF) is sufficient for transactivation activity. Residues 241–305 (YNCGEESLQS…YSMNMQPEDV (65 aa)) are sufficient for strong transactivation activity.

Belongs to the Nanog homeobox family.

It is found in the nucleus. Functionally, may act as a transcription regulator. When overexpressed, promotes entry of cells into S phase and cell proliferation. The polypeptide is Homeobox protein NANOGP8 (NANOGP8) (Homo sapiens (Human)).